Consider the following 298-residue polypeptide: Probable GTP 3',8-cyclase (298 aa).

In terms of domain architecture, Radical SAM core spans 4 to 227; that stretch reads RYGREIRSFR…MQNRKKYVID (224 aa). Residue arginine 13 coordinates GTP. Cysteine 20 and cysteine 24 together coordinate [4Fe-4S] cluster. Tyrosine 26 is an S-adenosyl-L-methionine binding site. Cysteine 27 is a [4Fe-4S] cluster binding site. Lysine 61 is a GTP binding site. Position 65 (glycine 65) interacts with S-adenosyl-L-methionine. Position 91 (threonine 91) interacts with GTP. Position 115 (serine 115) interacts with S-adenosyl-L-methionine. Lysine 152 contributes to the GTP binding site. Residues cysteine 243 and cysteine 246 each contribute to the [4Fe-4S] cluster site. 248–250 serves as a coordination point for GTP; it reads RIR. Residue cysteine 260 participates in [4Fe-4S] cluster binding.

It belongs to the radical SAM superfamily. MoaA family. It depends on [4Fe-4S] cluster as a cofactor.

The enzyme catalyses GTP + AH2 + S-adenosyl-L-methionine = (8S)-3',8-cyclo-7,8-dihydroguanosine 5'-triphosphate + 5'-deoxyadenosine + L-methionine + A + H(+). Its pathway is cofactor biosynthesis; molybdopterin biosynthesis. In terms of biological role, catalyzes the cyclization of GTP to (8S)-3',8-cyclo-7,8-dihydroguanosine 5'-triphosphate. The polypeptide is Probable GTP 3',8-cyclase (Methanococcus maripaludis (strain C6 / ATCC BAA-1332)).